The following is a 163-amino-acid chain: Large ribosomal subunit protein uL10 (163 aa).

Belongs to the universal ribosomal protein uL10 family. In terms of assembly, part of the ribosomal stalk of the 50S ribosomal subunit. The N-terminus interacts with L11 and the large rRNA to form the base of the stalk. The C-terminus forms an elongated spine to which L12 dimers bind in a sequential fashion forming a multimeric L10(L12)X complex.

In terms of biological role, forms part of the ribosomal stalk, playing a central role in the interaction of the ribosome with GTP-bound translation factors. This is Large ribosomal subunit protein uL10 from Actinobacillus succinogenes (strain ATCC 55618 / DSM 22257 / CCUG 43843 / 130Z).